Consider the following 582-residue polypeptide: 2-succinyl-5-enolpyruvyl-6-hydroxy-3-cyclohexene-1-carboxylate synthase (582 aa).

It belongs to the TPP enzyme family. MenD subfamily. Homodimer. Mg(2+) serves as cofactor. It depends on Mn(2+) as a cofactor. The cofactor is thiamine diphosphate.

The enzyme catalyses isochorismate + 2-oxoglutarate + H(+) = 5-enolpyruvoyl-6-hydroxy-2-succinyl-cyclohex-3-ene-1-carboxylate + CO2. Its pathway is quinol/quinone metabolism; 1,4-dihydroxy-2-naphthoate biosynthesis; 1,4-dihydroxy-2-naphthoate from chorismate: step 2/7. It participates in quinol/quinone metabolism; menaquinone biosynthesis. Catalyzes the thiamine diphosphate-dependent decarboxylation of 2-oxoglutarate and the subsequent addition of the resulting succinic semialdehyde-thiamine pyrophosphate anion to isochorismate to yield 2-succinyl-5-enolpyruvyl-6-hydroxy-3-cyclohexene-1-carboxylate (SEPHCHC). This is 2-succinyl-5-enolpyruvyl-6-hydroxy-3-cyclohexene-1-carboxylate synthase from Chlorobaculum tepidum (strain ATCC 49652 / DSM 12025 / NBRC 103806 / TLS) (Chlorobium tepidum).